The primary structure comprises 122 residues: Non-specific lipid-transfer protein (122 aa).

The first 19 residues, 1–19 (MGVSRACFVVMVVVYMVVA), serve as a signal peptide directing secretion. The propeptide occupies 20 to 29 (ATPNVKLAEA). Intrachain disulfides connect Cys32/Cys81, Cys42/Cys58, Cys59/Cys104, and Cys79/Cys118.

As to quaternary structure, monomer.

In terms of biological role, plant non-specific lipid-transfer proteins transfer phospholipids as well as galactolipids across membranes. May play a role in wax or cutin deposition in the cell walls of expanding epidermal cells and certain secretory tissues. Binds saturated fatty acids, unsaturated fatty acids, lysolipids and, with highest efficiency, jasmonic acid. Has weak antimicrobial activity against fungi. Inhibits spore germination and hyphae elongation in A.niger VKM F-2259 and N.crassa VKM F-184. Has no antibacterial activity against A.tumefaciens A281, C.michiganensis VKM Ac-144 and P.syringae VKM B-1546. The chain is Non-specific lipid-transfer protein from Anethum graveolens (Dill).